Consider the following 101-residue polypeptide: Growth-regulated alpha protein (101 aa).

A signal peptide spans 1–28 (MAPATRSLLRAPLLLLLLLLATSRLATG). 2 disulfide bridges follow: Cys-37–Cys-63 and Cys-39–Cys-79.

The protein belongs to the intercrine alpha (chemokine CxC) family.

It localises to the secreted. Has chemotactic activity for neutrophils. The protein is Growth-regulated alpha protein (CXCL1) of Cricetulus griseus (Chinese hamster).